The chain runs to 245 residues: Dehydrogenase/reductase SDR family member 6 (245 aa).

Residues 16–18 (QGI), D37, and D58 contribute to the NAD(+) site. R144 contributes to the substrate binding site. The active-site Proton acceptor is the Y147. NAD(+) contacts are provided by residues K151 and 180–184 (VDTPS). 2 residues coordinate substrate: R188 and R205.

This sequence belongs to the short-chain dehydrogenases/reductases (SDR) family. In terms of assembly, homotetramer.

The protein localises to the cytoplasm. The catalysed reaction is cis-4-hydroxy-L-proline + NAD(+) = 4-oxo-L-proline + NADH + H(+). It catalyses the reaction (R)-3-hydroxybutanoate + NAD(+) = acetoacetate + NADH + H(+). It functions in the pathway amino-acid metabolism. Its pathway is siderophore biosynthesis. NAD(H)-dependent dehydrogenase/reductase with a preference for cyclic substrates. Catalyzes stereoselective conversion of 4-oxo-L-proline to cis-4-hydroxy-L-proline, likely a detoxification mechanism for ketoprolines. Mediates the formation of 2,5-dihydroxybenzoate (2,5-DHBA), a siderophore that chelates free cytoplasmic iron, thereby regulating iron transport and homeostasis while protecting cells against free radical-induced oxidative stress. The iron-siderophore complex is imported into mitochondria, providing an iron source for mitochondrial metabolic processes in particular heme synthesis. May act as a 3-hydroxybutyrate dehydrogenase. In Danio rerio (Zebrafish), this protein is Dehydrogenase/reductase SDR family member 6 (bdh2).